The primary structure comprises 349 residues: Alanine racemase (349 aa).

K35 serves as the catalytic Proton acceptor; specific for D-alanine. At K35 the chain carries N6-(pyridoxal phosphate)lysine. R130 contacts substrate. Y244 (proton acceptor; specific for L-alanine) is an active-site residue. M292 is a binding site for substrate.

This sequence belongs to the alanine racemase family. It depends on pyridoxal 5'-phosphate as a cofactor.

It carries out the reaction L-alanine = D-alanine. It participates in amino-acid biosynthesis; D-alanine biosynthesis; D-alanine from L-alanine: step 1/1. Its function is as follows. Catalyzes the interconversion of L-alanine and D-alanine. May also act on other amino acids. The polypeptide is Alanine racemase (alr) (Cereibacter sphaeroides (strain ATCC 17025 / ATH 2.4.3) (Rhodobacter sphaeroides)).